The sequence spans 776 residues: Homoaconitase, mitochondrial (776 aa).

The N-terminal 38 residues, 1-38, are a transit peptide targeting the mitochondrion; that stretch reads MQSRLVSQSGLGRRWAVLRCALSKTYQRRTLTSTRRQF. Cysteine 394, cysteine 463, and cysteine 466 together coordinate [4Fe-4S] cluster.

It belongs to the aconitase/IPM isomerase family. The cofactor is [4Fe-4S] cluster.

The protein resides in the mitochondrion. The catalysed reaction is (2R,3S)-homoisocitrate = cis-homoaconitate + H2O. The protein operates within amino-acid biosynthesis; L-lysine biosynthesis via AAA pathway; L-alpha-aminoadipate from 2-oxoglutarate: step 3/5. Catalyzes the reversible hydration of cis-homoaconitate to (2R,3S)-homoisocitrate, a step in the alpha-aminoadipate pathway for lysine biosynthesis. The polypeptide is Homoaconitase, mitochondrial (lys4) (Emericella nidulans (strain FGSC A4 / ATCC 38163 / CBS 112.46 / NRRL 194 / M139) (Aspergillus nidulans)).